A 721-amino-acid polypeptide reads, in one-letter code: ATP-dependent zinc metalloprotease FtsH (721 aa).

Residues 1–44 (MYFLKKIVNLFSSKIESEDNNVKKDDLTQPRKQSPEARKRRNRR) are Cytoplasmic-facing. The chain crosses the membrane as a helical span at residues 45–65 (IIFWLIILLIIGTIIGVIIYF). Residues 66-190 (SVRKEYDNVI…AGIPSSGFNP (125 aa)) are Extracellular-facing. Residues 191 to 211 (QVIISPLISIIFFIIFLYIIL) form a helical membrane-spanning segment. At 212–721 (RVSKAQSDSL…KDKEKDQKSN (510 aa)) the chain is on the cytoplasmic side. An ATP-binding site is contributed by 279-286 (GPPGTGKT). A Zn(2+)-binding site is contributed by H498. E499 is an active-site residue. Residues H502 and D577 each coordinate Zn(2+). Residues 686–721 (NKREASQKQANSSVEEAKVVDDEESIKDKEKDQKSN) are disordered. A compositionally biased stretch (basic and acidic residues) spans 700–721 (EEAKVVDDEESIKDKEKDQKSN).

This sequence in the central section; belongs to the AAA ATPase family. It in the C-terminal section; belongs to the peptidase M41 family. Homohexamer. Zn(2+) is required as a cofactor.

The protein localises to the cell membrane. In terms of biological role, acts as a processive, ATP-dependent zinc metallopeptidase for both cytoplasmic and membrane proteins. Plays a role in the quality control of integral membrane proteins. This chain is ATP-dependent zinc metalloprotease FtsH, found in Ureaplasma parvum serovar 3 (strain ATCC 27815 / 27 / NCTC 11736).